Reading from the N-terminus, the 162-residue chain is Shikimate kinase (162 aa).

Position 11–16 (11–16 (GSGKSS)) interacts with ATP. S15 is a binding site for Mg(2+). Residues D33, R57, and G80 each contribute to the substrate site. R116 contributes to the ATP binding site. R132 is a binding site for substrate.

The protein belongs to the shikimate kinase family. As to quaternary structure, monomer. Mg(2+) serves as cofactor.

It is found in the cytoplasm. It carries out the reaction shikimate + ATP = 3-phosphoshikimate + ADP + H(+). It participates in metabolic intermediate biosynthesis; chorismate biosynthesis; chorismate from D-erythrose 4-phosphate and phosphoenolpyruvate: step 5/7. In terms of biological role, catalyzes the specific phosphorylation of the 3-hydroxyl group of shikimic acid using ATP as a cosubstrate. This chain is Shikimate kinase, found in Helicobacter pylori (strain J99 / ATCC 700824) (Campylobacter pylori J99).